We begin with the raw amino-acid sequence, 339 residues long: uncharacterized protein (339 aa).

The ABC transporter domain occupies 13–243 (LSLNKLDVGF…PATPFICEFI (231 aa)). 45–52 (GPSGSGKS) is an ATP binding site.

This sequence belongs to the ABC transporter superfamily.

It localises to the cell inner membrane. Probably part of a binding-protein-dependent transport system y4fNOP. Probably responsible for energy coupling to the transport system. This is an uncharacterized protein from Sinorhizobium fredii (strain NBRC 101917 / NGR234).